Reading from the N-terminus, the 483-residue chain is Malonate-semialdehyde dehydrogenase 2 (483 aa).

The NAD(+) site is built by Phe-152, Lys-176, Glu-179, Arg-180, and Ser-229. The active-site Nucleophile is the Cys-284. Glu-384 is a binding site for NAD(+).

Belongs to the aldehyde dehydrogenase family. IolA subfamily. Homotetramer.

It carries out the reaction 3-oxopropanoate + NAD(+) + CoA + H2O = hydrogencarbonate + acetyl-CoA + NADH + H(+). The catalysed reaction is 2-methyl-3-oxopropanoate + NAD(+) + CoA + H2O = propanoyl-CoA + hydrogencarbonate + NADH + H(+). It participates in polyol metabolism; myo-inositol degradation into acetyl-CoA; acetyl-CoA from myo-inositol: step 7/7. Catalyzes the oxidation of malonate semialdehyde (MSA) and methylmalonate semialdehyde (MMSA) into acetyl-CoA and propanoyl-CoA, respectively. Is involved in a myo-inositol catabolic pathway. Bicarbonate, and not CO2, is the end-product of the enzymatic reaction. This chain is Malonate-semialdehyde dehydrogenase 2, found in Geobacillus thermodenitrificans (strain NG80-2).